The following is a 675-amino-acid chain: Protein PALS1 (675 aa).

Disordered regions lie at residues 1 to 32 (MTTS…HPKH) and 52 to 79 (RSAQ…KQEL). Residues 1 to 345 (MTTSYMNGHV…QQIKPPPAKE (345 aa)) are required for the correct localization of PALS1 and PATJ at cell-cell contacts and the normal formation of tight junctions and adherens junctions. A phosphoserine mark is found at Ser14 and Ser25. The segment at 21–140 (LGLASPEEHP…LKHIQHTLVD (120 aa)) is interaction with PARD6B. Positions 54 to 79 (AQLERIRQQQEDMRRRREEEGKKQEL) are enriched in basic and acidic residues. Phosphoserine occurs at positions 83 and 84. L27 domains follow at residues 120–177 (KILE…NKAS) and 179–235 (PFPL…MQLE). The tract at residues 181-243 (PLIANVQDLV…LEPITDERVY (63 aa)) is interaction with LIN7C. The 81-residue stretch at 256–336 (IVRIEKARDI…TLTFVLIPSQ (81 aa)) folds into the PDZ domain. The 73-residue stretch at 345 to 417 (ETVIHVKAHF…PGKSFQQQRE (73 aa)) folds into the SH3 domain. The region spanning 479–660 (KRPIILIGPQ…AYQELLRLIN (182 aa)) is the Guanylate kinase-like domain. 486-493 (GPQNCGQN) is an ATP binding site.

This sequence belongs to the MAGUK family. Heterodimer with MPP1. Forms a heterotrimeric complex composed of PALS1, LIN7B and PATJ; the N-terminal L27 domain of PALS1 interacts with the L27 domain of PATJ and the C-terminal L27 domain of PALS1 interacts with the L27 domain of LIN7B. Component of a complex composed of PALS1, CRB1 and MPP4. Component of a complex whose core is composed of ARHGAP17, AMOT, PALS1, PATJ and PARD3/PAR3. Component of a complex composed of PALS1, CRB1 and EPB41L5. Within the complex, interacts (via HOOK domain) with EPB41L5 (via FERM domain), and interacts with CRB1 (via intracellular domain). Component of a complex composed of PALS1, MPP3 and CRB1; PALS1 acts as a bridging protein between MPP3 (via guanylate kinase-like domain) and CRB1. Component of a complex composed of CRB3, PALS1 and PATJ. As part of the Crumbs complex; interacts with WWP1, the interaction is enhanced by AMOTL2 and facilitates WWP1 localization to the plasma membrane. The Crumbs complex promotes monoubiquitination of AMOTL2 by WWP1, which activates the Hippo signaling pathway. Interacts (via PDZ domain) with PATJ (via N-terminus). Interacts with EZR. Interacts (via PDZ domain) with CRB1 (via C-terminal ERLI motif). While the PDZ domain is sufficient for interaction with CRB1, the adjacent SH3 and guanylate kinase-like domains are likely to contribute to a high affinity interaction. Interacts with WWTR1/TAZ (via WW domain). Interacts with MPP7. Interacts (via PDZ domain) with CRB3 (via C-terminus). Interacts with LIN7C. Interacts with MPDZ. Interacts with PARD6B. Interacts with SC6A1. Interacts with CDH5; the interaction promotes PALS1 localization to cell junctions and is required for CDH5-mediated vascular lumen formation and endothelial cell. Interacts with NPHP1 (via coiled coil and SH3 domains). Interacts with NPHP4. Interacts with CRB2.

The protein localises to the golgi apparatus. Its subcellular location is the cell membrane. It localises to the endomembrane system. It is found in the cell junction. The protein resides in the tight junction. The protein localises to the adherens junction. Its subcellular location is the cell projection. It localises to the axon. It is found in the perikaryon. The protein resides in the apical cell membrane. In terms of biological role, plays a role in tight junction biogenesis and in the establishment of cell polarity in epithelial cells. Also involved in adherens junction biogenesis by ensuring correct localization of the exocyst complex protein EXOC4/SEC8 which allows trafficking of adherens junction structural component CDH1 to the cell surface. Plays a role through its interaction with CDH5 in vascular lumen formation and endothelial membrane polarity. Required during embryonic and postnatal retinal development. Required for the maintenance of cerebellar progenitor cells in an undifferentiated proliferative state, preventing premature differentiation, and is required for cerebellar histogenesis, fissure formation, cerebellar layer organization and cortical development. Plays a role in neuronal progenitor cell survival, potentially via promotion of mTOR signaling. Plays a role in the radial and longitudinal extension of the myelin sheath in Schwann cells. May modulate SC6A1/GAT1-mediated GABA uptake by stabilizing the transporter. May play a role in the T-cell receptor-mediated activation of NF-kappa-B. Required for localization of EZR to the apical membrane of parietal cells and may play a role in the dynamic remodeling of the apical cytoskeleton. Required for the normal polarized localization of the vesicular marker STX4. Required for the correct trafficking of the myelin proteins PMP22 and MAG. Involved in promoting phosphorylation and cytoplasmic retention of transcriptional coactivators YAP1 and WWTR1/TAZ which leads to suppression of TGFB1-dependent transcription of target genes such as CCN2/CTGF, SERPINE1/PAI1, SNAI1/SNAIL1 and SMAD7. The sequence is that of Protein PALS1 from Rattus norvegicus (Rat).